A 468-amino-acid chain; its full sequence is 6-phosphogluconate dehydrogenase, NAD(+)-dependent, decarboxylating (468 aa).

NAD(+)-binding positions include 9 to 14, 32 to 34, 73 to 75, and asparagine 101; these read GLGVMG, NYT, and VTA. Residues asparagine 101 and 127 to 129 contribute to the substrate site; that span reads SGG. The active-site Proton acceptor is lysine 181. 184 to 185 serves as a coordination point for substrate; that stretch reads HN. Glutamate 188 acts as the Proton donor in catalysis. Positions 189, 259, 286, 445, and 451 each coordinate substrate.

This sequence belongs to the 6-phosphogluconate dehydrogenase family. Homodimer.

The enzyme catalyses 6-phospho-D-gluconate + NAD(+) = D-ribulose 5-phosphate + CO2 + NADH. In terms of biological role, catalyzes the oxidative decarboxylation of 6-phosphogluconate to ribulose 5-phosphate and CO(2), with concomitant reduction of NAD to NADH. Does not contribute to oxidative pentose phosphate (PP) pathway fluxes during growth on glucose. The functional role of GntZ remains obscure. The polypeptide is 6-phosphogluconate dehydrogenase, NAD(+)-dependent, decarboxylating (gntZ) (Bacillus subtilis (strain 168)).